A 639-amino-acid chain; its full sequence is Chaperone protein DnaK (639 aa).

Residue T198 is modified to Phosphothreonine; by autocatalysis. The segment at K604–K639 is disordered. Over residues Q606 to D624 the composition is skewed to low complexity. Positions D625 to K639 are enriched in acidic residues.

Belongs to the heat shock protein 70 family.

Acts as a chaperone. The polypeptide is Chaperone protein DnaK (Shewanella baltica (strain OS223)).